The following is a 24-amino-acid chain: Protein YsdE (24 aa).

This chain is Protein YsdE, found in Escherichia coli (strain K12).